Here is a 310-residue protein sequence, read N- to C-terminus: MSTVTLSSGYEMPVIGLGLWRLEKDELKEVILNAIKIGYRHFDCAAHYKSEADVGEALAEAFKTGLVKREELFITTKIWNSDHGHVVEACKNSLEKLQIDYLDLYLVHYPMPTKHNAIGKTASLLGEDKVLDIDVTISLQQTWEGMEKTVSLGLVRSIGLSNYELFLTRDCLAYSKIKPAVSQFETHPYFQRDSLVKFCMKHGVLPTAHTPLGGAAANKDMFGSVSPLDDPVLNDVAKKYGKSVAQICLRWGIQRKTAVIPKSSKIQRLKENLEVLEFQLSDEDMQLIYSIDRKYRTSLPSKTWGLDVYA.

Tyrosine 48 functions as the Proton donor in the catalytic mechanism. Histidine 108 is a binding site for substrate. An NADP(+)-binding site is contributed by 210 to 272 (TPLGGAAANK…SSKIQRLKEN (63 aa)).

The protein belongs to the aldo/keto reductase family.

It catalyses the reaction D-sorbitol 6-phosphate + NADP(+) = aldehydo-D-glucose 6-phosphate + NADPH + H(+). Synthesizes sorbitol-6-phosphate, a key intermediate in the synthesis of sorbitol which is a major photosynthetic product in many members of the Rosaceae family. This is NADP-dependent D-sorbitol-6-phosphate dehydrogenase (S6PDH) from Malus domestica (Apple).